We begin with the raw amino-acid sequence, 310 residues long: Ribonuclease HIII (310 aa).

Positions 91 to 307 constitute an RNase H type-2 domain; sequence YNCIGSDEAG…REKAQNLVTK (217 aa). A divalent metal cation contacts are provided by Asp-97, Glu-98, and Asp-202.

It belongs to the RNase HII family. RnhC subfamily. Mn(2+) is required as a cofactor. Requires Mg(2+) as cofactor.

Its subcellular location is the cytoplasm. It catalyses the reaction Endonucleolytic cleavage to 5'-phosphomonoester.. Its function is as follows. Endonuclease that specifically degrades the RNA of RNA-DNA hybrids. This chain is Ribonuclease HIII, found in Staphylococcus haemolyticus (strain JCSC1435).